A 293-amino-acid chain; its full sequence is Ribosomal RNA small subunit methyltransferase A (293 aa).

S-adenosyl-L-methionine-binding residues include Asn36, Leu38, Gly63, Glu84, Asp111, and Asn132.

It belongs to the class I-like SAM-binding methyltransferase superfamily. rRNA adenine N(6)-methyltransferase family. RsmA subfamily.

The protein resides in the cytoplasm. The enzyme catalyses adenosine(1518)/adenosine(1519) in 16S rRNA + 4 S-adenosyl-L-methionine = N(6)-dimethyladenosine(1518)/N(6)-dimethyladenosine(1519) in 16S rRNA + 4 S-adenosyl-L-homocysteine + 4 H(+). In terms of biological role, specifically dimethylates two adjacent adenosines (A1518 and A1519) in the loop of a conserved hairpin near the 3'-end of 16S rRNA in the 30S particle. May play a critical role in biogenesis of 30S subunits. This chain is Ribosomal RNA small subunit methyltransferase A, found in Treponema denticola (strain ATCC 35405 / DSM 14222 / CIP 103919 / JCM 8153 / KCTC 15104).